A 366-amino-acid polypeptide reads, in one-letter code: Cyclin-O protein A (366 aa).

Disordered stretches follow at residues 18-55 (AAFSSGKRKRDSGYSPGDATPGDRGEGGPDWPSAGIKK) and 80-99 (YETPSPSPVAPTPTNEPYDS).

This sequence belongs to the cyclin family.

The protein localises to the cytoplasm. Functionally, specifically required for generation of multiciliated cells, possibly by promoting a cell cycle state compatible with centriole amplification and maturation. Acts downstream of mcidas to promote mother centriole amplification and maturation in preparation for apical docking. The protein is Cyclin-O protein A (ccno-a) of Xenopus laevis (African clawed frog).